Reading from the N-terminus, the 665-residue chain is Transketolase (665 aa).

A substrate-binding site is contributed by H26. Thiamine diphosphate is bound by residues H66 and 114–116; that span reads GPL. The segment at 94 to 114 is disordered; sequence NSKTPGHPETGETPGVETTTG. Over residues 97–114 the composition is skewed to low complexity; that stretch reads TPGHPETGETPGVETTTG. Position 155 (D155) interacts with Mg(2+). Thiamine diphosphate contacts are provided by G156 and N185. 2 residues coordinate Mg(2+): N185 and I187. Substrate contacts are provided by H261, R358, and S385. H261 contributes to the thiamine diphosphate binding site. E411 (proton donor) is an active-site residue. F437 contacts thiamine diphosphate. Substrate contacts are provided by H461, D469, and R520.

Belongs to the transketolase family. As to quaternary structure, homodimer. It depends on Mg(2+) as a cofactor. Requires Ca(2+) as cofactor. Mn(2+) serves as cofactor. Co(2+) is required as a cofactor. The cofactor is thiamine diphosphate.

The enzyme catalyses D-sedoheptulose 7-phosphate + D-glyceraldehyde 3-phosphate = aldehydo-D-ribose 5-phosphate + D-xylulose 5-phosphate. In terms of biological role, catalyzes the transfer of a two-carbon ketol group from a ketose donor to an aldose acceptor, via a covalent intermediate with the cofactor thiamine pyrophosphate. The protein is Transketolase (tkt) of Buchnera aphidicola subsp. Acyrthosiphon pisum (strain APS) (Acyrthosiphon pisum symbiotic bacterium).